The sequence spans 59 residues: Large ribosomal subunit protein uL30 (59 aa).

This sequence belongs to the universal ribosomal protein uL30 family. As to quaternary structure, part of the 50S ribosomal subunit.

The chain is Large ribosomal subunit protein uL30 from Staphylococcus epidermidis (strain ATCC 12228 / FDA PCI 1200).